The sequence spans 400 residues: uncharacterized protein (400 aa).

A signal peptide spans 1–23; that stretch reads MSRKLLLALTFLVVLGIAVVVMA.

This is an uncharacterized protein from Archaeoglobus fulgidus (strain ATCC 49558 / DSM 4304 / JCM 9628 / NBRC 100126 / VC-16).